A 64-amino-acid polypeptide reads, in one-letter code: Translation machinery-associated protein 7 homolog (64 aa).

A disordered region spans residues 1–64 (MSGRQGGKAK…GGGIKKSGKK (64 aa)). The stretch at 21–50 (DLSEEDVEFKKKQQEEAKKIKEMAAKAGQR) forms a coiled coil. The span at 28–44 (EFKKKQQEEAKKIKEMA) shows a compositional bias: basic and acidic residues. A compositionally biased stretch (gly residues) spans 53–64 (LLGGGIKKSGKK).

The protein belongs to the TMA7 family.

This Caenorhabditis elegans protein is Translation machinery-associated protein 7 homolog.